Consider the following 582-residue polypeptide: Protein LYRIC (582 aa).

At 1–48 (MAARSWQDELAQQAEEGSARLREMLSVGLGFLRTELGLDLGLEPKRYP) the chain is on the lumenal side. The activation of NF-kappa-B stretch occupies residues 1-71 (MAARSWQDEL…LLLFLLGYGW (71 aa)). A helical transmembrane segment spans residues 49–69 (GWVILVGTGALGLLLLFLLGY). The Cytoplasmic segment spans residues 70 to 582 (GWAAACAGAR…KKKKKARRET (513 aa)). Residues 72-169 (AAACAGARKK…EKSKKNKKKS (98 aa)) form an interaction with BCCIP region. Residues 78–222 (ARKKRRSPPR…DSGSLDSTIP (145 aa)) are disordered. Over residues 93–106 (AAVPAAAPDDLALL) the composition is skewed to low complexity. Residues 101 to 205 (DDLALLKNLR…ISHREKRQQR (105 aa)) are interaction with RELA. A compositionally biased stretch (basic and acidic residues) spans 109–127 (LRSEEQKKKNRKKLSEKPK). At Thr-143 the chain carries Phosphothreonine. Over residues 160-169 (EKSKKNKKKS) the composition is skewed to basic residues. Position 180 is a phosphoserine (Ser-180). Residues 198–208 (HREKRQQRKRD) show a composition bias toward basic residues. 2 positions are modified to phosphoserine: Ser-216 and Ser-251. The residue at position 264 (Lys-264) is an N6-acetyllysine. A disordered region spans residues 280-582 (TVNGGGWNEK…KKKKKARRET (303 aa)). Phosphoserine is present on residues Ser-298, Ser-306, Ser-308, Ser-311, Ser-323, Ser-339, Ser-344, and Ser-369. Residues 320 to 333 (SAWSQDTGDANTNG) show a composition bias toward polar residues. Polar residues-rich tracts occupy residues 354 to 372 (EPVS…SRNQ) and 383 to 394 (NGLSSADPNSDW). The tract at residues 381 to 443 (GLNGLSSADP…EGALPTGKSK (63 aa)) is lung-homing for mammary tumors. Phosphoserine occurs at positions 415 and 426. Residues 421-434 (DDQKVSDDDKEKGE) show a composition bias toward basic and acidic residues. The span at 441 to 451 (KSKKKKKKKKK) shows a compositional bias: basic residues. Residue Ser-457 is modified to Phosphoserine. Thr-458 is modified (phosphothreonine). 3 positions are modified to phosphoserine: Ser-478, Ser-494, and Ser-496. Composition is skewed to polar residues over residues 504–520 (KNSQ…STEP) and 549–568 (NTKQ…SWES). A Phosphoserine modification is found at Ser-568. Residues 571–582 (QIKKKKKARRET) show a composition bias toward basic residues.

In terms of assembly, interacts with BCCIP, CREBBP/CBP and RELA/p65. As to expression, widely expressed with highest levels in muscle-dominating organs such as skeletal muscle, heart, tongue and small intestine and in endocrine glands such as thyroid and adrenal gland. Overexpressed in various cancers including breast, brain, prostate, melanoma and glioblastoma multiforme.

The protein localises to the endoplasmic reticulum membrane. The protein resides in the nucleus membrane. It is found in the cell junction. Its subcellular location is the tight junction. It localises to the nucleus. The protein localises to the nucleolus. The protein resides in the cytoplasm. It is found in the perinuclear region. Its function is as follows. Down-regulates SLC1A2/EAAT2 promoter activity when expressed ectopically. Activates the nuclear factor kappa-B (NF-kappa-B) transcription factor. Promotes anchorage-independent growth of immortalized melanocytes and astrocytes which is a key component in tumor cell expansion. Promotes lung metastasis and also has an effect on bone and brain metastasis, possibly by enhancing the seeding of tumor cells to the target organ endothelium. Induces chemoresistance. This Homo sapiens (Human) protein is Protein LYRIC (MTDH).